The chain runs to 544 residues: Chaperonin GroEL 1 (544 aa).

Residues 29-32, 86-90, Gly413, 479-481, and Asp495 contribute to the ATP site; these read TLGP, DGTTT, and NAA. Residues 525–544 are disordered; sequence PEPKDNAPAGAGAGGGDFDY. A compositionally biased stretch (gly residues) spans 535–544; sequence AGAGGGDFDY.

It belongs to the chaperonin (HSP60) family. In terms of assembly, forms a cylinder of 14 subunits composed of two heptameric rings stacked back-to-back. Interacts with the co-chaperonin GroES.

It localises to the cytoplasm. It carries out the reaction ATP + H2O + a folded polypeptide = ADP + phosphate + an unfolded polypeptide.. Functionally, together with its co-chaperonin GroES, plays an essential role in assisting protein folding. The GroEL-GroES system forms a nano-cage that allows encapsulation of the non-native substrate proteins and provides a physical environment optimized to promote and accelerate protein folding. This chain is Chaperonin GroEL 1, found in Nostoc sp. (strain PCC 7120 / SAG 25.82 / UTEX 2576).